A 299-amino-acid polypeptide reads, in one-letter code: MKRPDYRALQALDAVIRERGFERAAQKLCITQSAVSQRIKQLENLFGQPLLVRTVPPQPTEQGQKLLALLHQVEMLEEQWLGDENSGSTPLLLSLAVNADSLATWLLPALHPVLTQLPIRLNIQVEDETRTQERLRRGEVVGAISIQPQALPSCLVDQLGALDYLFVASPDFAQRYFANGVTKSSLLKAPAVAFDHLDDMHQAFLQQNFGLSPGSVPCHIVNSSEAFVQLAKQGSTCCMIPHLQIADELKSGELIDLTPGLCQRRMLYWHRFAPESRTMRKVTDALLDYGRKVLKQDEE.

The region spanning 4 to 60 (PDYRALQALDAVIRERGFERAAQKLCITQSAVSQRIKQLENLFGQPLLVRTVPPQPT) is the HTH lysR-type domain. Positions 21–40 (FERAAQKLCITQSAVSQRIK) form a DNA-binding region, H-T-H motif.

This sequence belongs to the LysR transcriptional regulatory family. In terms of assembly, homodimer.

Its function is as follows. Controls the transcription of genes involved in arginine and lysine metabolism. In Proteus mirabilis (strain HI4320), this protein is HTH-type transcriptional regulator ArgP.